Here is a 164-residue protein sequence, read N- to C-terminus: MNKEPMSMHGYNKICAELKQLKEVERPNIVKEIDIARGHGDLKENAEYHAAKEKQRFIEARIVDLSEIVANAQVIDPSVLAHNKVSFGSTIKILNLDNDKEFSYTIVGSVESDPAKGLISFGSPIAKSLIGKSKGDAVSIQLPNGESDFEILDIYYKEICFDEN.

The protein belongs to the GreA/GreB family.

Functionally, necessary for efficient RNA polymerase transcription elongation past template-encoded arresting sites. The arresting sites in DNA have the property of trapping a certain fraction of elongating RNA polymerases that pass through, resulting in locked ternary complexes. Cleavage of the nascent transcript by cleavage factors such as GreA or GreB allows the resumption of elongation from the new 3'terminus. GreA releases sequences of 2 to 3 nucleotides. The sequence is that of Transcription elongation factor GreA from Helicobacter pylori (strain P12).